Here is a 135-residue protein sequence, read N- to C-terminus: Probable 5-hydroxyisourate hydrolase R09H10.3 (135 aa).

The signal sequence occupies residues 1–20 (MNKFSLFFALTATLMTITES). Substrate contacts are provided by histidine 30, arginine 68, and tyrosine 132.

This sequence belongs to the transthyretin family. 5-hydroxyisourate hydrolase subfamily. As to quaternary structure, homotetramer.

The catalysed reaction is 5-hydroxyisourate + H2O = 5-hydroxy-2-oxo-4-ureido-2,5-dihydro-1H-imidazole-5-carboxylate + H(+). Functionally, catalyzes the hydrolysis of 5-hydroxyisourate (HIU) to 2-oxo-4-hydroxy-4-carboxy-5-ureidoimidazoline (OHCU). The sequence is that of Probable 5-hydroxyisourate hydrolase R09H10.3 from Caenorhabditis elegans.